The chain runs to 220 residues: StAR-related lipid transfer protein 6 (220 aa).

Residues 1 to 208 enclose the START domain; that stretch reads MDFKAIAQQT…AKDGIKAHRT (208 aa).

Functionally, may be involved in the intracellular transport of sterols or other lipids. May bind cholesterol or other sterols. This chain is StAR-related lipid transfer protein 6 (STARD6), found in Homo sapiens (Human).